We begin with the raw amino-acid sequence, 210 residues long: MAIYKSLTEADLLAFSTGLIAGVDEVGRGPLVGDVVTAAVILDPNKPISGLNDSKKLSEKRREALFDEICDKALCYHVGRASPAEIDELNILHATMLAMQRAVAGLNIAPELVLVDGNRSPIFVAHNGAELTSHSIIKGDGLIASISAASIIAKVTRDREMDVLDAAYPQYGFAKHKGYPTKAHFEAIAEHGVFDQYRKSFKPVKALLGL.

Residues 18–210 (GLIAGVDEVG…FKPVKALLGL (193 aa)) enclose the RNase H type-2 domain. A divalent metal cation-binding residues include Asp24, Glu25, and Asp116.

This sequence belongs to the RNase HII family. Requires Mn(2+) as cofactor. Mg(2+) serves as cofactor.

The protein localises to the cytoplasm. The catalysed reaction is Endonucleolytic cleavage to 5'-phosphomonoester.. Functionally, endonuclease that specifically degrades the RNA of RNA-DNA hybrids. This is Ribonuclease HII from Shewanella baltica (strain OS155 / ATCC BAA-1091).